The sequence spans 139 residues: Protein 2.8 (139 aa).

This Escherichia phage T7 (Bacteriophage T7) protein is Protein 2.8.